The primary structure comprises 179 residues: Large ribosomal subunit protein uL6 (179 aa).

Belongs to the universal ribosomal protein uL6 family. Part of the 50S ribosomal subunit.

Functionally, this protein binds to the 23S rRNA, and is important in its secondary structure. It is located near the subunit interface in the base of the L7/L12 stalk, and near the tRNA binding site of the peptidyltransferase center. The protein is Large ribosomal subunit protein uL6 of Geotalea daltonii (strain DSM 22248 / JCM 15807 / FRC-32) (Geobacter daltonii).